The following is a 153-amino-acid chain: Allergen Pet c 1 (153 aa).

Belongs to the BetVI family. As to quaternary structure, may form dimers.

The chain is Allergen Pet c 1 from Petroselinum crispum (Parsley).